The following is a 158-amino-acid chain: D-aminoacyl-tRNA deacylase (158 aa).

The Gly-cisPro motif, important for rejection of L-amino acids motif lies at 143 to 144 (GP).

This sequence belongs to the DTD family. Homodimer.

The protein localises to the cytoplasm. It catalyses the reaction glycyl-tRNA(Ala) + H2O = tRNA(Ala) + glycine + H(+). The enzyme catalyses a D-aminoacyl-tRNA + H2O = a tRNA + a D-alpha-amino acid + H(+). In terms of biological role, an aminoacyl-tRNA editing enzyme that deacylates mischarged D-aminoacyl-tRNAs. Also deacylates mischarged glycyl-tRNA(Ala), protecting cells against glycine mischarging by AlaRS. Acts via tRNA-based rather than protein-based catalysis; rejects L-amino acids rather than detecting D-amino acids in the active site. By recycling D-aminoacyl-tRNA to D-amino acids and free tRNA molecules, this enzyme counteracts the toxicity associated with the formation of D-aminoacyl-tRNA entities in vivo and helps enforce protein L-homochirality. This Solidesulfovibrio magneticus (strain ATCC 700980 / DSM 13731 / RS-1) (Desulfovibrio magneticus) protein is D-aminoacyl-tRNA deacylase.